The following is a 214-amino-acid chain: Pyrrolidone-carboxylate peptidase (214 aa).

Catalysis depends on residues glutamate 79, cysteine 142, and histidine 166.

The protein belongs to the peptidase C15 family. In terms of assembly, homotetramer.

The protein localises to the cytoplasm. It carries out the reaction Release of an N-terminal pyroglutamyl group from a polypeptide, the second amino acid generally not being Pro.. Functionally, removes 5-oxoproline from various penultimate amino acid residues except L-proline. This chain is Pyrrolidone-carboxylate peptidase, found in Fusobacterium nucleatum subsp. nucleatum (strain ATCC 25586 / DSM 15643 / BCRC 10681 / CIP 101130 / JCM 8532 / KCTC 2640 / LMG 13131 / VPI 4355).